The sequence spans 526 residues: Seipin-2 (526 aa).

Residues 33 to 77 form a disordered region; sequence PIRSNSHQPSSLLRRRKSAHRRDLISSDIETEPSSSSDGFDVGEK. Positions 58–70 are enriched in low complexity; sequence SSDIETEPSSSSD. Helical transmembrane passes span 195–215, 224–243, 258–278, and 483–503; these read SLLTFPPWLLRNCFLFFFDPF, FLMARVAGISDMIFGYMNPF, FGWGMFWAVYVGIVLFGLLVS, and LFVWISMSLFITELLFTLVCC.

The protein belongs to the seipin family. In terms of tissue distribution, expressed in seeds, seedlings, leaves, stems and roots. Not detected in flowers.

The protein resides in the endoplasmic reticulum membrane. Its function is as follows. Involved in lipid metabolism and lipid droplet (LD) morphology, number, and size. Supports the formation of small-sized LDs and modulates triacylglycerol accumulation. Induces probably a reorganization of the endoplasmic reticulum into LD-forming domains. This Arabidopsis thaliana (Mouse-ear cress) protein is Seipin-2.